The following is a 123-amino-acid chain: UPF0426 protein At1g28150, chloroplastic (123 aa).

Residues 1–26 (MGFVLICTCPPSSGVVVSQLHHHQFS) constitute a chloroplast transit peptide. The disordered stretch occupies residues 97–123 (SGITEEEVDADGVVSNDEDSPQQIEIE). Acidic residues predominate over residues 100 to 123 (TEEEVDADGVVSNDEDSPQQIEIE).

The protein belongs to the UPF0426 family.

It localises to the plastid. The protein localises to the chloroplast. The protein resides in the plastoglobule. This is UPF0426 protein At1g28150, chloroplastic from Arabidopsis thaliana (Mouse-ear cress).